Reading from the N-terminus, the 217-residue chain is GTP cyclohydrolase 1 (217 aa).

Cys-109, His-112, and Cys-180 together coordinate Zn(2+).

The protein belongs to the GTP cyclohydrolase I family. As to quaternary structure, toroid-shaped homodecamer, composed of two pentamers of five dimers.

It carries out the reaction GTP + H2O = 7,8-dihydroneopterin 3'-triphosphate + formate + H(+). It participates in cofactor biosynthesis; 7,8-dihydroneopterin triphosphate biosynthesis; 7,8-dihydroneopterin triphosphate from GTP: step 1/1. In Vibrio parahaemolyticus serotype O3:K6 (strain RIMD 2210633), this protein is GTP cyclohydrolase 1.